We begin with the raw amino-acid sequence, 418 residues long: cAMP-dependent protein kinase type II-beta regulatory subunit (418 aa).

The interval 2-153 (SIEIPAGLTE…RLQEACKDIL (152 aa)) is dimerization and phosphorylation. Positions 45–57 (RKGTARFGHEGRT) are enriched in basic and acidic residues. Positions 45-98 (RKGTARFGHEGRTWGDAGAAGGGGTPSKGVNFAEEPRHSDSENGEEEEEEAADA) are disordered. Phosphothreonine is present on Thr-69. A phosphoserine mark is found at Ser-83 and Ser-85. Over residues 86–96 (ENGEEEEEEAA) the composition is skewed to acidic residues. Ser-114 is subject to Phosphoserine. Residues 154-275 (LFKN…ESLP), Glu-223, Arg-232, 276-418 (FLKS…EPTA), Glu-352, and Arg-361 contribute to the 3',5'-cyclic AMP site.

The protein belongs to the cAMP-dependent kinase regulatory chain family. The inactive form of the enzyme is composed of two regulatory chains and two catalytic chains. Activation by cAMP produces two active catalytic monomers and a regulatory dimer that binds four cAMP molecules. Interacts with PRKACA and PRKACB. Interacts with the phosphorylated form of PJA2. Forms a complex composed of PRKAR2B, GSK3B and GSKIP through GSKIP interaction; facilitates PKA-induced phosphorylation and regulates GSK3B activity. Post-translationally, phosphorylated by the activated catalytic chain. As to expression, four types of regulatory chains are found: I-alpha, I-beta, II-alpha, and II-beta. Their expression varies among tissues and is in some cases constitutive and in others inducible.

The protein resides in the cytoplasm. The protein localises to the cell membrane. Functionally, regulatory subunit of the cAMP-dependent protein kinases involved in cAMP signaling in cells. Type II regulatory chains mediate membrane association by binding to anchoring proteins, including the MAP2 kinase. The chain is cAMP-dependent protein kinase type II-beta regulatory subunit (PRKAR2B) from Bos taurus (Bovine).